Consider the following 140-residue polypeptide: Desampylase (140 aa).

In terms of domain architecture, MPN spans 13-133 (TLIIPQHYLR…WILSEKNKIS (121 aa)). E34 (proton donor/acceptor) is an active-site residue. The Zn(2+) site is built by H88, H90, and D101. Residues 88–101 (HSHIACPPIPSGKD) carry the JAMM motif motif.

Belongs to the peptidase M67B family. In terms of assembly, exists in two major states: monomer and homodimer. Both conformational states are catalytically active. It depends on Zn(2+) as a cofactor. The disulfide bridge probably stabilizes the PfJAMM1 homodimer at the optimal growth temperature of the hyperthermophile.

It catalyses the reaction an N(6)-[small archaeal modifier protein]-[protein]-L-lysine + H2O = a [protein]-L-lysine + a [small archaeal modifier protein].. Its activity is regulated as follows. Inhibited by EDTA in vitro. In terms of biological role, metalloprotease that displays desampylase (DSAMP) activity, cleaving ubiquitin-like small archaeal modifier proteins (SAMP1, SAMP2 and SAMP3) from protein conjugates (isopeptide- and linear-linked). Thus, likely regulates sampylation and the pools of 'free' SAMP available for protein modification. In vitro, is also able to cleave non-physiological ubiquitin (Ub) substrates, such as 'Met1-', 'Lys48-', and 'Lys63'-linked Ub dimers (Ub2), and to remove Ub tags from diverse proteins. The sequence is that of Desampylase from Pyrococcus furiosus (strain ATCC 43587 / DSM 3638 / JCM 8422 / Vc1).